Consider the following 343-residue polypeptide: Probable dual-specificity RNA methyltransferase RlmN (343 aa).

Glutamate 92 acts as the Proton acceptor in catalysis. A Radical SAM core domain is found at 98–328 (YHHGLTACIS…TTVRREMGAD (231 aa)). Cysteine 105 and cysteine 333 are disulfide-bonded. Positions 112, 116, and 119 each coordinate [4Fe-4S] cluster. Residues 159-160 (GE), serine 191, 214-216 (SLH), and asparagine 290 each bind S-adenosyl-L-methionine. Catalysis depends on cysteine 333, which acts as the S-methylcysteine intermediate.

Belongs to the radical SAM superfamily. RlmN family. Requires [4Fe-4S] cluster as cofactor.

The protein localises to the cytoplasm. It carries out the reaction adenosine(2503) in 23S rRNA + 2 reduced [2Fe-2S]-[ferredoxin] + 2 S-adenosyl-L-methionine = 2-methyladenosine(2503) in 23S rRNA + 5'-deoxyadenosine + L-methionine + 2 oxidized [2Fe-2S]-[ferredoxin] + S-adenosyl-L-homocysteine. The catalysed reaction is adenosine(37) in tRNA + 2 reduced [2Fe-2S]-[ferredoxin] + 2 S-adenosyl-L-methionine = 2-methyladenosine(37) in tRNA + 5'-deoxyadenosine + L-methionine + 2 oxidized [2Fe-2S]-[ferredoxin] + S-adenosyl-L-homocysteine. Specifically methylates position 2 of adenine 2503 in 23S rRNA and position 2 of adenine 37 in tRNAs. The protein is Probable dual-specificity RNA methyltransferase RlmN of Alkaliphilus oremlandii (strain OhILAs) (Clostridium oremlandii (strain OhILAs)).